Reading from the N-terminus, the 771-residue chain is Probable glycosyltransferase STELLO1 (771 aa).

The interval 1 to 23 is disordered; that stretch reads MLVQDRAAPSPAKPPKSQIRELP. The Cytoplasmic segment spans residues 1–50; the sequence is MLVQDRAAPSPAKPPKSQIRELPTHQQIRRRFSEPKNLDFSTWFSENLSR. Residues 51–71 traverse the membrane as a helical segment; sequence IAVFSLLIVTIVAFFFLYNTT. The Lumenal segment spans residues 72–771; sequence DTASLLCFQS…EGDPLLMELV (700 aa). 2 N-linked (GlcNAc...) asparagine glycosylation sites follow: asparagine 242 and asparagine 729.

This sequence belongs to the STELLO family. Homo- and heterodimer with STL2. Interacts with CESA1, CESA3, CESA4, CESA6, CESA7 and CESA8, but not with GOT1. Expressed in cells that are expanding or producing secondary cell walls.

It localises to the golgi apparatus membrane. Probable glycosyltransferase regulating the assembly and trafficking of cellulose synthase complexes. The protein is Probable glycosyltransferase STELLO1 of Arabidopsis thaliana (Mouse-ear cress).